The following is a 165-amino-acid chain: Phosphopantetheine adenylyltransferase (165 aa).

Ser9 lines the substrate pocket. Residues 9 to 10 and His17 contribute to the ATP site; that span reads SF. Substrate contacts are provided by Lys41, Ile75, and Arg89. Residues 90–92, Glu100, and 125–131 contribute to the ATP site; these read GVR and YLFVRSD.

It belongs to the bacterial CoaD family. In terms of assembly, homohexamer. Mg(2+) is required as a cofactor.

The protein localises to the cytoplasm. The catalysed reaction is (R)-4'-phosphopantetheine + ATP + H(+) = 3'-dephospho-CoA + diphosphate. It functions in the pathway cofactor biosynthesis; coenzyme A biosynthesis; CoA from (R)-pantothenate: step 4/5. Its function is as follows. Reversibly transfers an adenylyl group from ATP to 4'-phosphopantetheine, yielding dephospho-CoA (dPCoA) and pyrophosphate. The protein is Phosphopantetheine adenylyltransferase of Borrelia hermsii (strain HS1 / DAH).